The following is a 686-amino-acid chain: Probable serine/threonine-protein kinase pdkA (686 aa).

The disordered stretch occupies residues 1–31 (MENIVITNTSGGGGGGVPSSSTDPPNNTTTT). A compositionally biased stretch (low complexity) spans 18–31 (PSSSTDPPNNTTTT). One can recognise a Protein kinase domain in the interval 69 to 449 (FIIGKVLGEG…FDNLKAHPFF (381 aa)). ATP is bound by residues 79-81 (SYG) and Lys98. The segment at 100–144 (LEKKQIIKENKIKYVQIEKEIFCKSNHPNIVKLFFTFRSEQCLYY) is PIF-pocket. ATP is bound by residues 147 to 149 (ELC) and Asp153. Asp192 (proton acceptor) is an active-site residue. Residues Glu196 and Asp210 each coordinate ATP. Disordered stretches follow at residues 211–321 (FGTG…NTNT) and 481–584 (LFSP…NNIS). The span at 222-257 (SSQQQQQQQQQQQQLPTNSSGNLSSLLNNVNNLSVS) shows a compositional bias: low complexity. A compositionally biased stretch (polar residues) spans 258-267 (TDLTQQQQNR). 3 stretches are compositionally biased toward low complexity: residues 268 to 279 (TSSVDSASTTDS), 288 to 321 (TTTT…NTNT), and 503 to 568 (NSCN…QRSG). In terms of domain architecture, PH spans 593-682 (VIYQGLVWKR…DSIKSVILSS (90 aa)).

Belongs to the protein kinase superfamily. AGC Ser/Thr protein kinase family. PDPK1 subfamily.

It catalyses the reaction L-seryl-[protein] + ATP = O-phospho-L-seryl-[protein] + ADP + H(+). It carries out the reaction L-threonyl-[protein] + ATP = O-phospho-L-threonyl-[protein] + ADP + H(+). This chain is Probable serine/threonine-protein kinase pdkA (pdkA), found in Dictyostelium discoideum (Social amoeba).